The following is a 160-amino-acid chain: NADH-quinone oxidoreductase subunit I (160 aa).

4Fe-4S ferredoxin-type domains lie at 52-81 (RRYS…IEAE) and 91-120 (TRYD…EGPN). Residues C61, C64, C67, C71, C100, C103, C106, and C110 each coordinate [4Fe-4S] cluster.

The protein belongs to the complex I 23 kDa subunit family. As to quaternary structure, NDH-1 is composed of 14 different subunits. Subunits NuoA, H, J, K, L, M, N constitute the membrane sector of the complex. It depends on [4Fe-4S] cluster as a cofactor.

It is found in the cell membrane. The enzyme catalyses a quinone + NADH + 5 H(+)(in) = a quinol + NAD(+) + 4 H(+)(out). NDH-1 shuttles electrons from NADH, via FMN and iron-sulfur (Fe-S) centers, to quinones in the respiratory chain. The immediate electron acceptor for the enzyme in this species is believed to be ubiquinone. Couples the redox reaction to proton translocation (for every two electrons transferred, four hydrogen ions are translocated across the cytoplasmic membrane), and thus conserves the redox energy in a proton gradient. The sequence is that of NADH-quinone oxidoreductase subunit I from Wolbachia sp. subsp. Brugia malayi (strain TRS).